Reading from the N-terminus, the 244-residue chain is MDTESNRRANLALPQEPSSVPAFEVLEISPQEVSSGRLLKSASSPPLHTWLTVLKKEQEFLGVTQILTAMICLCFGTVVCSVLDISHIEGDIFSSFKAGYPFWGAIFFSISGMLSIISERRNATYLVRGSLGANTASSIAGGTGITILIINLKKSLAYIHIHSCQKFFETKCFMASFSTEIVVMMLFLTILGLGSAVSLTICGAGEELKGNKVPEDRVYEELNIYSATYSELEDPGEMSPPIDL.

Residues 1-59 (MDTESNRRANLALPQEPSSVPAFEVLEISPQEVSSGRLLKSASSPPLHTWLTVLKKEQE) lie on the Cytoplasmic side of the membrane. A helical transmembrane segment spans residues 60-79 (FLGVTQILTAMICLCFGTVV). The Extracellular segment spans residues 80-97 (CSVLDISHIEGDIFSSFK). Residues 98-117 (AGYPFWGAIFFSISGMLSII) traverse the membrane as a helical segment. The Cytoplasmic portion of the chain corresponds to 118–130 (SERRNATYLVRGS). Residues 131-150 (LGANTASSIAGGTGITILII) form a helical membrane-spanning segment. Topologically, residues 151 to 180 (NLKKSLAYIHIHSCQKFFETKCFMASFSTE) are extracellular. The chain crosses the membrane as a helical span at residues 181 to 200 (IVVMMLFLTILGLGSAVSLT). The Cytoplasmic segment spans residues 201 to 244 (ICGAGEELKGNKVPEDRVYEELNIYSATYSELEDPGEMSPPIDL). Phosphotyrosine is present on residues Tyr219 and Tyr225. Ser226 carries the phosphoserine modification. A Phosphotyrosine modification is found at Tyr229.

The protein belongs to the MS4A family. As to quaternary structure, tetramer of an alpha chain, a beta chain, and two disulfide linked gamma chains. Binds LILRB1. Interacts with FGR, FES/FPS and LYN. Post-translationally, phosphorylated on tyrosine residues by LYN. In terms of tissue distribution, found on the surface of mast cells and basophils.

Its subcellular location is the membrane. Functionally, high affinity receptor that binds to the Fc region of immunoglobulins epsilon. Aggregation of FCER1 by multivalent antigens is required for the full mast cell response, including the release of preformed mediators (such as histamine) by degranulation and de novo production of lipid mediators and cytokines. Also mediates the secretion of important lymphokines. Binding of allergen to receptor-bound IgE leads to cell activation and the release of mediators responsible for the manifestations of allergy. The protein is High affinity immunoglobulin epsilon receptor subunit beta (MS4A2) of Homo sapiens (Human).